A 201-amino-acid chain; its full sequence is Adenylyl-sulfate kinase (201 aa).

The segment at 1 to 23 (MALHDENVVWHSHPVTPQQREQH) is disordered. Residue 35–42 (GLSGSGKS) coordinates ATP. The active-site Phosphoserine intermediate is serine 109.

It belongs to the APS kinase family.

The catalysed reaction is adenosine 5'-phosphosulfate + ATP = 3'-phosphoadenylyl sulfate + ADP + H(+). It participates in sulfur metabolism; hydrogen sulfide biosynthesis; sulfite from sulfate: step 2/3. In terms of biological role, catalyzes the synthesis of activated sulfate. The protein is Adenylyl-sulfate kinase of Escherichia coli O6:K15:H31 (strain 536 / UPEC).